The following is a 431-amino-acid chain: NADH-quinone oxidoreductase subunit D 2 (431 aa).

The disordered stretch occupies residues 1–37; sequence MSEAKGVGGIDPRATPGSAGAGERPPMGTLSPRAGEG.

Belongs to the complex I 49 kDa subunit family. As to quaternary structure, NDH-1 is composed of 14 different subunits. Subunits NuoB, C, D, E, F, and G constitute the peripheral sector of the complex.

It is found in the cell inner membrane. The catalysed reaction is a quinone + NADH + 5 H(+)(in) = a quinol + NAD(+) + 4 H(+)(out). In terms of biological role, NDH-1 shuttles electrons from NADH, via FMN and iron-sulfur (Fe-S) centers, to quinones in the respiratory chain. The immediate electron acceptor for the enzyme in this species is believed to be ubiquinone. Couples the redox reaction to proton translocation (for every two electrons transferred, four hydrogen ions are translocated across the cytoplasmic membrane), and thus conserves the redox energy in a proton gradient. This chain is NADH-quinone oxidoreductase subunit D 2, found in Anaeromyxobacter sp. (strain K).